The chain runs to 158 residues: MSAERASAPVMDVEAIQRILPHRPPFLLVDRVVAVEPGVRLVAWKSVTMNEPFFVGHFPGKPVMPGVLILEALAQACALLAVKSMGPDEDVDEKITYLMSIDGAKFRRPVVPGDRLELHVEVVKRKGAIWRQKGTAIVDGQTVAEADFMAMLADREQE.

The active site involves H57.

The protein belongs to the thioester dehydratase family. FabZ subfamily.

It is found in the cytoplasm. It carries out the reaction a (3R)-hydroxyacyl-[ACP] = a (2E)-enoyl-[ACP] + H2O. Functionally, involved in unsaturated fatty acids biosynthesis. Catalyzes the dehydration of short chain beta-hydroxyacyl-ACPs and long chain saturated and unsaturated beta-hydroxyacyl-ACPs. This Anaeromyxobacter sp. (strain Fw109-5) protein is 3-hydroxyacyl-[acyl-carrier-protein] dehydratase FabZ.